The following is a 474-amino-acid chain: Trehalose-6-phosphate synthase (474 aa).

Arginine 10 contacts D-glucose 6-phosphate. Position 22–23 (22–23) interacts with UDP-alpha-D-glucose; sequence GG. D-glucose 6-phosphate-binding residues include tyrosine 77 and aspartate 131. 2 residues coordinate UDP-alpha-D-glucose: arginine 263 and lysine 268. Arginine 301 lines the D-glucose 6-phosphate pocket. Residues phenylalanine 340 and 366–370 contribute to the UDP-alpha-D-glucose site; that span reads LVAKE.

The protein belongs to the glycosyltransferase 20 family. In terms of assembly, homotetramer.

The catalysed reaction is D-glucose 6-phosphate + UDP-alpha-D-glucose = alpha,alpha-trehalose 6-phosphate + UDP + H(+). Its pathway is glycan biosynthesis; trehalose biosynthesis. Probably involved in the osmoprotection via the biosynthesis of trehalose. Catalyzes the transfer of glucose from UDP-alpha-D-glucose (UDP-Glc) to D-glucose 6-phosphate (Glc-6-P) to form trehalose-6-phosphate. Acts with retention of the anomeric configuration of the UDP-sugar donor. This chain is Trehalose-6-phosphate synthase, found in Cronobacter sakazakii (strain ATCC BAA-894) (Enterobacter sakazakii).